The primary structure comprises 209 residues: Large ribosomal subunit protein uL4 (209 aa).

The segment at 50 to 78 is disordered; sequence STLKKGEVSGGGKKPYQQKHTGRARQGSI.

This sequence belongs to the universal ribosomal protein uL4 family. Part of the 50S ribosomal subunit.

Functionally, one of the primary rRNA binding proteins, this protein initially binds near the 5'-end of the 23S rRNA. It is important during the early stages of 50S assembly. It makes multiple contacts with different domains of the 23S rRNA in the assembled 50S subunit and ribosome. Its function is as follows. Forms part of the polypeptide exit tunnel. The protein is Large ribosomal subunit protein uL4 of Mycoplasmoides gallisepticum (strain R(low / passage 15 / clone 2)) (Mycoplasma gallisepticum).